The following is a 410-amino-acid chain: Testis-specific protein TEX28 (410 aa).

The disordered stretch occupies residues methionine 1–leucine 43. The segment covering serine 10–arginine 23 has biased composition (polar residues). A compositionally biased stretch (low complexity) spans serine 24–leucine 38. Residues glutamine 93–arginine 128 adopt a coiled-coil conformation. A disordered region spans residues glutamate 137–proline 164. The stretch at glutamine 185–lysine 245 forms a coiled coil. The helical transmembrane segment at leucine 336–serine 358 threads the bilayer.

It belongs to the TEX28 family. As to expression, testis specific.

It is found in the membrane. The sequence is that of Testis-specific protein TEX28 (TEX28) from Homo sapiens (Human).